A 250-amino-acid chain; its full sequence is Phosphoribosylaminoimidazole-succinocarboxamide synthase (250 aa).

Belongs to the SAICAR synthetase family.

It catalyses the reaction 5-amino-1-(5-phospho-D-ribosyl)imidazole-4-carboxylate + L-aspartate + ATP = (2S)-2-[5-amino-1-(5-phospho-beta-D-ribosyl)imidazole-4-carboxamido]succinate + ADP + phosphate + 2 H(+). The protein operates within purine metabolism; IMP biosynthesis via de novo pathway; 5-amino-1-(5-phospho-D-ribosyl)imidazole-4-carboxamide from 5-amino-1-(5-phospho-D-ribosyl)imidazole-4-carboxylate: step 1/2. The protein is Phosphoribosylaminoimidazole-succinocarboxamide synthase of Bifidobacterium adolescentis (strain ATCC 15703 / DSM 20083 / NCTC 11814 / E194a).